The following is a 321-amino-acid chain: Cytochrome c biogenesis protein CcsA (321 aa).

8 helical membrane-spanning segments follow: residues 1-21 (MIFI…ISVV), 36-56 (LSSS…GLLI), 70-90 (LYES…ILEV), 97-117 (GLGA…TSGL), 143-163 (ILLS…FLII), 229-249 (VIGL…VWAN), 256-276 (WSWD…AIYL), and 290-310 (AIIA…VDLL).

Belongs to the CcmF/CycK/Ccl1/NrfE/CcsA family. In terms of assembly, may interact with Ccs1.

The protein resides in the plastid. The protein localises to the chloroplast thylakoid membrane. Required during biogenesis of c-type cytochromes (cytochrome c6 and cytochrome f) at the step of heme attachment. The protein is Cytochrome c biogenesis protein CcsA of Cycas taitungensis (Prince sago).